The primary structure comprises 62 residues: Chromatin protein Cren7 1 (62 aa).

This sequence belongs to the Cren7 family. In terms of assembly, monomer. Post-translationally, methylated at multiple sites, to varying extents.

It localises to the chromosome. It is found in the cytoplasm. A chromatin protein, binds double-stranded DNA without sequence specificity. Constrains negative DNA supercoils. This Hyperthermus butylicus (strain DSM 5456 / JCM 9403 / PLM1-5) protein is Chromatin protein Cren7 1 (cren7-1).